Here is a 150-residue protein sequence, read N- to C-terminus: Lipoprotein signal peptidase (150 aa).

The next 3 helical transmembrane spans lie at 5-25 (LSLV…NWIV), 59-79 (QQWF…WFLW), and 83-103 (AQNW…GNFI). Active-site residues include D113 and D129. A helical membrane pass occupies residues 124–144 (IFNIADILLSVGFVLLFIAIL).

The protein belongs to the peptidase A8 family.

It localises to the cell membrane. The enzyme catalyses Release of signal peptides from bacterial membrane prolipoproteins. Hydrolyzes -Xaa-Yaa-Zaa-|-(S,diacylglyceryl)Cys-, in which Xaa is hydrophobic (preferably Leu), and Yaa (Ala or Ser) and Zaa (Gly or Ala) have small, neutral side chains.. The protein operates within protein modification; lipoprotein biosynthesis (signal peptide cleavage). Its function is as follows. This protein specifically catalyzes the removal of signal peptides from prolipoproteins. The chain is Lipoprotein signal peptidase from Lactococcus lactis subsp. lactis (strain IL1403) (Streptococcus lactis).